A 182-amino-acid polypeptide reads, in one-letter code: Proline-rich protein, Y-linked (182 aa).

Disordered stretches follow at residues 1–22 and 89–108; these read MMRR…KPRD and VPAD…PPPG. Pro residues predominate over residues 91 to 108; it reads ADPPPASPYRTSPRPPPG. A DUF1725 domain is found at 154–167; it reads WMKLETIILSKLSQ.

The chain is Proline-rich protein, Y-linked (PRORY) from Homo sapiens (Human).